The sequence spans 278 residues: Gasdermin-like protein het-Q1 (278 aa).

Belongs to the gasdermin family. In terms of assembly, homooligomer; forms a homooligomeric ring-shaped pore complex when inserted in the membrane. In terms of processing, the precursor form is cleaved by het-Q2, generating the pore-forming protein (Gasdermin-like protein het-Q1, N-terminal).

Its subcellular location is the cell membrane. In terms of biological role, gasdermin-like protein involved in heterokaryon incompatibility, a process that ensures that during spontaneous vegetative cell fusion, only compatible cells from the same colony survive (non-self-recognition). In P.anserina, the het-q locus exists as 2 incompatible alleles, het-Q1 (this entry) and het-Q2 (AC P0DW09). This form constitutes the precursor of the pore-forming protein: during the allorecognition process, it is cleaved by het-Q2, releasing the N-terminal moiety (Gasdermin-like protein het-Q1, N-terminal) that binds to membranes and forms pores, triggering cell death. Pore-forming protein that causes membrane permeabilization and cell death. Released upon cleavage and maturation by het-Q2 and binds to membrane inner leaflet lipids. Homooligomerizes within the membrane and forms pores of 10-15 nanometers (nm) of inner diameter, triggering cell death. This Podospora anserina (strain S / ATCC MYA-4624 / DSM 980 / FGSC 10383) (Pleurage anserina) protein is Gasdermin-like protein het-Q1.